A 215-amino-acid chain; its full sequence is Sodium channel regulatory subunit beta-2 (215 aa).

A signal peptide spans 1-29; the sequence is MHRDAWLPRPAFSLTGLSLFFSLVPPGRS. At 30–157 the chain is on the extracellular side; it reads MEVTVPATLN…XEEPPERDST (128 aa). An Ig-like C2-type domain is found at 32-154; that stretch reads VTVPATLNVL…QVLXEEPPER (123 aa). N-linked (GlcNAc...) asparagine glycosylation is found at Asn-42, Asn-66, and Asn-74. 2 cysteine pairs are disulfide-bonded: Cys-50-Cys-127 and Cys-72-Cys-75. The helical transmembrane segment at 158–179 threads the bilayer; sequence VAVIVGASVGGFLAVVILVLMV. Residues 180-215 are Cytoplasmic-facing; that stretch reads VKCVRRKKEQKLSTDDLKTEEEGKTDGEGNPDDGAK. The interval 187–215 is disordered; that stretch reads KEQKLSTDDLKTEEEGKTDGEGNPDDGAK. Residues 189 to 215 show a composition bias toward basic and acidic residues; sequence QKLSTDDLKTEEEGKTDGEGNPDDGAK. A Phosphoserine modification is found at Ser-192. The residue at position 204 (Thr-204) is a Phosphothreonine.

It belongs to the sodium channel auxiliary subunit SCN2B (TC 8.A.17) family. A voltage-gated sodium (Nav) channel consists of an ion-conducting pore-forming alpha subunit functional on its own that is regulated by one or more beta subunits. The beta subunit SCN2B is disulfide-linked to the pore-forming alpha subunit. Interacts with SCN1A; regulatory subunit of SCN1A/Nav1.1. Interacts with SCN2A; regulatory subunit of SCN2A/Nav1.2. Interacts with SCN3A; regulatory subunit of SCN3A/Nav1.3. Interacts with SCN5A; regulatory subunit of SCN5A/Nav1.5. Interacts with SCN8A; regulatory subunit of SCN8A/Nav1.6. Interacts with SCN9A; regulatory subunit of SCN9A/Nav1.7. Interacts with SCN10A; regulatory subunit of SCN10A/Nav1.8. Interacts with TNR; may play a crucial role in clustering and regulation of activity of SCN2B-containing Nav channels at nodes of Ranvier.

Its subcellular location is the cell membrane. It localises to the cell projection. The protein localises to the axon. Regulatory subunit of multiple voltage-gated sodium (Nav) channels, that directly mediate the depolarization of excitable membranes. Navs, also called VGSCs (voltage-gated sodium channels) or VDSCs (voltage-dependent sodium channels), operate by switching between closed and open conformations depending on the voltage difference across the membrane. In the open conformation they allow Na(+) ions to selectively pass through the pore, along their electrochemical gradient. The influx of Na+ ions provokes membrane depolarization, initiating the propagation of electrical signals throughout cells and tissues. The accessory beta subunits participate in localization and functional modulation of the Nav channels. Modulates the activity of SCN1A/Nav1.1, SCN2A/Nav1.2, SCN2A/Nav1.3, SCN5A/Nav1.5, SCN8A/Nav1.6, SCN9A/Nav1.7 and SCN10A/Nav1.8. The polypeptide is Sodium channel regulatory subunit beta-2 (Canis lupus familiaris (Dog)).